A 390-amino-acid polypeptide reads, in one-letter code: Tryptophan synthase beta chain 2 (390 aa).

Lys-83 is subject to N6-(pyridoxal phosphate)lysine.

The protein belongs to the TrpB family. Tetramer of two alpha and two beta chains. It depends on pyridoxal 5'-phosphate as a cofactor.

The catalysed reaction is (1S,2R)-1-C-(indol-3-yl)glycerol 3-phosphate + L-serine = D-glyceraldehyde 3-phosphate + L-tryptophan + H2O. Its pathway is amino-acid biosynthesis; L-tryptophan biosynthesis; L-tryptophan from chorismate: step 5/5. Its function is as follows. The beta subunit is responsible for the synthesis of L-tryptophan from indole and L-serine. This chain is Tryptophan synthase beta chain 2 (trpB2), found in Methanothermobacter marburgensis (strain ATCC BAA-927 / DSM 2133 / JCM 14651 / NBRC 100331 / OCM 82 / Marburg) (Methanobacterium thermoautotrophicum).